The primary structure comprises 472 residues: L-fuculokinase (472 aa).

Belongs to the FGGY kinase family. The cofactor is a divalent metal cation.

It carries out the reaction L-fuculose + ATP = L-fuculose 1-phosphate + ADP + H(+). It functions in the pathway carbohydrate degradation; L-fucose degradation; L-lactaldehyde and glycerone phosphate from L-fucose: step 2/3. Its function is as follows. Catalyzes the phosphorylation of L-fuculose. Can also phosphorylate, with lower efficiency, D-ribulose, D-xylulose and D-fructose. In Escherichia coli (strain K12), this protein is L-fuculokinase.